The following is a 386-amino-acid chain: Glyceraldehyde-3-phosphate dehydrogenase, chloroplastic (386 aa).

The transit peptide at 1 to 45 (MAYFKAVAYLAALASAAAFNPGSSFVPRLNAPATQPKAAKMTGPT) directs the protein to the chloroplast. NADP(+) is bound by residues 58-59 (RI) and arginine 125. D-glyceraldehyde 3-phosphate-binding positions include 197–199 (SCT), threonine 228, 257–258 (TG), and arginine 280. Cysteine 198 serves as the catalytic Nucleophile. Asparagine 362 provides a ligand contact to NADP(+).

This sequence belongs to the glyceraldehyde-3-phosphate dehydrogenase family. As to quaternary structure, homotetramer.

The protein localises to the plastid. It is found in the chloroplast. It carries out the reaction D-glyceraldehyde 3-phosphate + phosphate + NADP(+) = (2R)-3-phospho-glyceroyl phosphate + NADPH + H(+). The enzyme catalyses D-glyceraldehyde 3-phosphate + phosphate + NAD(+) = (2R)-3-phospho-glyceroyl phosphate + NADH + H(+). It functions in the pathway carbohydrate biosynthesis; Calvin cycle. The protein is Glyceraldehyde-3-phosphate dehydrogenase, chloroplastic (GAPC1) of Guillardia theta (Cryptophyte).